The sequence spans 311 residues: tRNA dimethylallyltransferase (311 aa).

16-23 serves as a coordination point for ATP; that stretch reads GATASGKS. Residue 18–23 coordinates substrate; the sequence is TASGKS. 2 interaction with substrate tRNA regions span residues 41–44 and 165–169; these read DSRQ and QRLIR.

The protein belongs to the IPP transferase family. As to quaternary structure, monomer. Mg(2+) is required as a cofactor.

The enzyme catalyses adenosine(37) in tRNA + dimethylallyl diphosphate = N(6)-dimethylallyladenosine(37) in tRNA + diphosphate. Catalyzes the transfer of a dimethylallyl group onto the adenine at position 37 in tRNAs that read codons beginning with uridine, leading to the formation of N6-(dimethylallyl)adenosine (i(6)A). The protein is tRNA dimethylallyltransferase of Chlorobium chlorochromatii (strain CaD3).